Reading from the N-terminus, the 248-residue chain is ATP synthase subunit a, chloroplastic (248 aa).

Transmembrane regions (helical) follow at residues 38 to 58, 96 to 116, 135 to 155, 200 to 220, and 221 to 241; these read QVLI…TIVV, VPFI…GALL, INTT…AGIS, LVVV…VMFL, and GLFT…AYIG.

It belongs to the ATPase A chain family. In terms of assembly, F-type ATPases have 2 components, CF(1) - the catalytic core - and CF(0) - the membrane proton channel. CF(1) has five subunits: alpha(3), beta(3), gamma(1), delta(1), epsilon(1). CF(0) has four main subunits: a, b, b' and c.

The protein localises to the plastid. Its subcellular location is the chloroplast thylakoid membrane. In terms of biological role, key component of the proton channel; it plays a direct role in the translocation of protons across the membrane. In Amborella trichopoda, this protein is ATP synthase subunit a, chloroplastic.